Consider the following 482-residue polypeptide: Putative dipeptidase NECHADRAFT_87110 (482 aa).

A compositionally biased stretch (polar residues) spans 1–21 (MADTQTPNLQNTAEGDANTSA). Residues 1–24 (MADTQTPNLQNTAEGDANTSAENE) are disordered. The N-linked (GlcNAc...) asparagine glycan is linked to Asn-18. The chain crosses the membrane as a helical span at residues 41-61 (WLRYPFLVAGIALFLGPFSFF). The Zn(2+) site is built by His-90, Asp-92, and Glu-201. A disulfide bridge connects residues Cys-141 and Cys-230. His-228 serves as a coordination point for substrate. Zn(2+)-binding residues include His-272 and His-293. Substrate-binding residues include Arg-304 and Asp-364.

This sequence belongs to the metallo-dependent hydrolases superfamily. Peptidase M19 family. It depends on Zn(2+) as a cofactor.

The protein localises to the membrane. The catalysed reaction is an L-aminoacyl-L-amino acid + H2O = 2 an L-alpha-amino acid. Functionally, hydrolyzes a wide range of dipeptides. This is Putative dipeptidase NECHADRAFT_87110 from Fusarium vanettenii (strain ATCC MYA-4622 / CBS 123669 / FGSC 9596 / NRRL 45880 / 77-13-4) (Fusarium solani subsp. pisi).